The following is a 362-amino-acid chain: Phosphoserine aminotransferase (362 aa).

An L-glutamate-binding site is contributed by Arg-43. Residues 77–78 (AT), Trp-103, Thr-153, Asp-173, and Gln-196 contribute to the pyridoxal 5'-phosphate site. Lys-197 is subject to N6-(pyridoxal phosphate)lysine. 238–239 (NT) provides a ligand contact to pyridoxal 5'-phosphate.

This sequence belongs to the class-V pyridoxal-phosphate-dependent aminotransferase family. SerC subfamily. Homodimer. The cofactor is pyridoxal 5'-phosphate.

It localises to the cytoplasm. The catalysed reaction is O-phospho-L-serine + 2-oxoglutarate = 3-phosphooxypyruvate + L-glutamate. It carries out the reaction 4-(phosphooxy)-L-threonine + 2-oxoglutarate = (R)-3-hydroxy-2-oxo-4-phosphooxybutanoate + L-glutamate. It functions in the pathway amino-acid biosynthesis; L-serine biosynthesis; L-serine from 3-phospho-D-glycerate: step 2/3. The protein operates within cofactor biosynthesis; pyridoxine 5'-phosphate biosynthesis; pyridoxine 5'-phosphate from D-erythrose 4-phosphate: step 3/5. Catalyzes the reversible conversion of 3-phosphohydroxypyruvate to phosphoserine and of 3-hydroxy-2-oxo-4-phosphonooxybutanoate to phosphohydroxythreonine. The chain is Phosphoserine aminotransferase from Acidithiobacillus ferrooxidans (strain ATCC 23270 / DSM 14882 / CIP 104768 / NCIMB 8455) (Ferrobacillus ferrooxidans (strain ATCC 23270)).